The chain runs to 206 residues: LexA repressor (206 aa).

The segment at residues 28-48 is a DNA-binding region (H-T-H motif); that stretch reads RAEIARRLGFKSANAAEEHLK. Residues Ser123 and Lys160 each act as for autocatalytic cleavage activity in the active site.

It belongs to the peptidase S24 family. Homodimer.

The catalysed reaction is Hydrolysis of Ala-|-Gly bond in repressor LexA.. In terms of biological role, represses a number of genes involved in the response to DNA damage (SOS response), including recA and lexA. In the presence of single-stranded DNA, RecA interacts with LexA causing an autocatalytic cleavage which disrupts the DNA-binding part of LexA, leading to derepression of the SOS regulon and eventually DNA repair. The sequence is that of LexA repressor from Shewanella pealeana (strain ATCC 700345 / ANG-SQ1).